We begin with the raw amino-acid sequence, 223 residues long: Urease accessory protein UreF (223 aa).

Belongs to the UreF family. In terms of assembly, ureD, UreF and UreG form a complex that acts as a GTP-hydrolysis-dependent molecular chaperone, activating the urease apoprotein by helping to assemble the nickel containing metallocenter of UreC. The UreE protein probably delivers the nickel.

The protein resides in the cytoplasm. In terms of biological role, required for maturation of urease via the functional incorporation of the urease nickel metallocenter. In Rhizobium johnstonii (strain DSM 114642 / LMG 32736 / 3841) (Rhizobium leguminosarum bv. viciae), this protein is Urease accessory protein UreF.